We begin with the raw amino-acid sequence, 137 residues long: Golgin subfamily A member 7 (137 aa).

Residues C69 and C72 are each lipidated (S-palmitoyl cysteine).

Belongs to the ERF4 family. In terms of assembly, interacts with GOLGA3. Interacts with ZDHHC9. Palmitoylated on Cys-69 and Cys-72; which is required for Golgi localization and interaction with GOLGA3.

The protein localises to the golgi apparatus membrane. Its function is as follows. May be involved in protein transport from Golgi to cell surface. The ZDHHC9-GOLGA7 complex is a palmitoyltransferase specific for HRAS and NRAS. In Bos taurus (Bovine), this protein is Golgin subfamily A member 7 (GOLGA7).